The following is a 480-amino-acid chain: DnaJ homolog subfamily A member 3, mitochondrial (480 aa).

Residue arginine 58 is modified to Omega-N-methylarginine; by CARM1. A J domain is found at 93 to 158; it reads DYYQILGVPR…VKRKQYDAYG (66 aa). The residue at position 134 (lysine 134) is an N6-acetyllysine. The segment at 223-301 adopts a CR-type zinc-finger fold; sequence GVNKEFTVNI…CRGAGQAKQK (79 aa). A Zn(2+)-binding site is contributed by cysteine 236. 4 CXXCXGXG motif repeats span residues 236–243, 253–260, 275–282, and 289–296; these read CERCDGKG, CHYCGGSG, CRRCGGRG, and CVVCRGAG. Arginine 238 is subject to Omega-N-methylarginine; by CARM1. Residues cysteine 239, cysteine 253, cysteine 256, cysteine 275, cysteine 278, cysteine 289, and cysteine 292 each contribute to the Zn(2+) site. Arginine 293 is subject to Omega-N-methylarginine; by CARM1. Serine 398 carries the post-translational modification Phosphoserine. Residues 437-468 are disordered; the sequence is TVNGVTHTSTGGRTMDSSAGSKDRREAGEDNE. The segment covering 439–456 has biased composition (polar residues); it reads NGVTHTSTGGRTMDSSAG.

In terms of assembly, interacts with JAK2, HSPA9B and IFN-gammaR2 chain. Interacts with Ras GTPase-activating protein 1 (RASA1). Isoform 2 interacts with MUSK (via the cytoplasmic domain). Tyrosine phosphorylated.

The protein resides in the mitochondrion matrix. The protein localises to the cytoplasm. It is found in the cytosol. It localises to the postsynaptic cell membrane. In terms of biological role, modulates apoptotic signal transduction or effector structures within the mitochondrial matrix. Affect cytochrome C release from the mitochondria and caspase 3 activation, but not caspase 8 activation. Isoform 1 increases apoptosis triggered by both TNF and the DNA-damaging agent mytomycin C; in sharp contrast, isoform 2 suppresses apoptosis. Can modulate IFN-gamma-mediated transcriptional activity. Isoform 2 may play a role in neuromuscular junction development as an effector of the MUSK signaling pathway. The polypeptide is DnaJ homolog subfamily A member 3, mitochondrial (Dnaja3) (Mus musculus (Mouse)).